The sequence spans 405 residues: L-carnitine CoA-transferase (405 aa).

Residues K97 and R104 each contribute to the CoA site. The Nucleophile role is filled by D169.

The protein belongs to the CoA-transferase III family. CaiB subfamily. As to quaternary structure, homodimer.

The protein resides in the cytoplasm. The catalysed reaction is crotonobetainyl-CoA + (R)-carnitine = crotonobetaine + (R)-carnitinyl-CoA. It carries out the reaction 4-(trimethylamino)butanoyl-CoA + (R)-carnitine = (R)-carnitinyl-CoA + 4-(trimethylamino)butanoate. Its pathway is amine and polyamine metabolism; carnitine metabolism. Catalyzes the reversible transfer of the CoA moiety from gamma-butyrobetainyl-CoA to L-carnitine to generate L-carnitinyl-CoA and gamma-butyrobetaine. Is also able to catalyze the reversible transfer of the CoA moiety from gamma-butyrobetainyl-CoA or L-carnitinyl-CoA to crotonobetaine to generate crotonobetainyl-CoA. The polypeptide is L-carnitine CoA-transferase (Salmonella gallinarum (strain 287/91 / NCTC 13346)).